The chain runs to 55 residues: Large ribosomal subunit protein bL33 (55 aa).

Belongs to the bacterial ribosomal protein bL33 family.

This is Large ribosomal subunit protein bL33 from Gluconacetobacter diazotrophicus (strain ATCC 49037 / DSM 5601 / CCUG 37298 / CIP 103539 / LMG 7603 / PAl5).